A 431-amino-acid polypeptide reads, in one-letter code: ORC1-type DNA replication protein 14 (431 aa).

Residues 62 to 66 (TGKSL), Tyr-219, and Arg-231 contribute to the ATP site.

Belongs to the CDC6/cdc18 family.

In terms of biological role, involved in regulation of DNA replication. The protein is ORC1-type DNA replication protein 14 (cdc6n) of Haloarcula marismortui (strain ATCC 43049 / DSM 3752 / JCM 8966 / VKM B-1809) (Halobacterium marismortui).